Consider the following 453-residue polypeptide: Bifunctional protein GlmU (453 aa).

The tract at residues 1–226 (MFAIAILAAG…IDEVSGVNDR (226 aa)) is pyrophosphorylase. UDP-N-acetyl-alpha-D-glucosamine-binding positions include 7–10 (LAAG), Lys21, Gln73, and 78–79 (GT). Asp103 contacts Mg(2+). The UDP-N-acetyl-alpha-D-glucosamine site is built by Gly140, Glu155, Asn170, and Asn224. Mg(2+) is bound at residue Asn224. A linker region spans residues 227–247 (AQLANCENLIQQSLRNHWMSK). The segment at 248-453 (GVSFIDPESC…NWKTREETNQ (206 aa)) is N-acetyltransferase. Residues Arg329 and Lys347 each contribute to the UDP-N-acetyl-alpha-D-glucosamine site. The active-site Proton acceptor is the His359. Residues Tyr362 and Asn373 each contribute to the UDP-N-acetyl-alpha-D-glucosamine site. Residues Ala376, Ala419, and Arg436 each contribute to the acetyl-CoA site.

In the N-terminal section; belongs to the N-acetylglucosamine-1-phosphate uridyltransferase family. The protein in the C-terminal section; belongs to the transferase hexapeptide repeat family. As to quaternary structure, homotrimer. Mg(2+) serves as cofactor.

The protein resides in the cytoplasm. The enzyme catalyses alpha-D-glucosamine 1-phosphate + acetyl-CoA = N-acetyl-alpha-D-glucosamine 1-phosphate + CoA + H(+). The catalysed reaction is N-acetyl-alpha-D-glucosamine 1-phosphate + UTP + H(+) = UDP-N-acetyl-alpha-D-glucosamine + diphosphate. It participates in nucleotide-sugar biosynthesis; UDP-N-acetyl-alpha-D-glucosamine biosynthesis; N-acetyl-alpha-D-glucosamine 1-phosphate from alpha-D-glucosamine 6-phosphate (route II): step 2/2. The protein operates within nucleotide-sugar biosynthesis; UDP-N-acetyl-alpha-D-glucosamine biosynthesis; UDP-N-acetyl-alpha-D-glucosamine from N-acetyl-alpha-D-glucosamine 1-phosphate: step 1/1. It functions in the pathway bacterial outer membrane biogenesis; LPS lipid A biosynthesis. Functionally, catalyzes the last two sequential reactions in the de novo biosynthetic pathway for UDP-N-acetylglucosamine (UDP-GlcNAc). The C-terminal domain catalyzes the transfer of acetyl group from acetyl coenzyme A to glucosamine-1-phosphate (GlcN-1-P) to produce N-acetylglucosamine-1-phosphate (GlcNAc-1-P), which is converted into UDP-GlcNAc by the transfer of uridine 5-monophosphate (from uridine 5-triphosphate), a reaction catalyzed by the N-terminal domain. The sequence is that of Bifunctional protein GlmU from Prochlorococcus marinus (strain MIT 9211).